The primary structure comprises 428 residues: MTVQTSPPSAALAETMLDMGRRARAASRELGLLTAQDRTRGLKAIAAAIRAAAPDVLRANAEDMAAARAKGLAPAMLDRLALDEKRLEGVAAGVETVAALPDPLGRELARWTPPNGLDIARIAVPLGVIGIIYESRPNVTVDAGVLCLRSGNAAILRGGSESAKSSAALANAMRGALKSEELPVDAIQLVATTNREAVGHMLGGLEGALDVIVPRGGRSLVERVQAEARVPVIGHLEGLCHTYVHAAADPKKAVDIVLNAKMRRTGVCGSTETLLIDVAVAATLLPQIAKALTDAGCELRGDGRTRAILGDITPATEADWATEYLDAILSIAVVDGLPGALAHLARWSSGHTDAIITEDTAAAETFIANVDSAIVLHNASTQFADGGEFGFGAEIGIATGRIHARGPVGAEQLTTYKYAVRGTGQVRP.

It belongs to the gamma-glutamyl phosphate reductase family.

It localises to the cytoplasm. The catalysed reaction is L-glutamate 5-semialdehyde + phosphate + NADP(+) = L-glutamyl 5-phosphate + NADPH + H(+). It functions in the pathway amino-acid biosynthesis; L-proline biosynthesis; L-glutamate 5-semialdehyde from L-glutamate: step 2/2. Its function is as follows. Catalyzes the NADPH-dependent reduction of L-glutamate 5-phosphate into L-glutamate 5-semialdehyde and phosphate. The product spontaneously undergoes cyclization to form 1-pyrroline-5-carboxylate. The protein is Gamma-glutamyl phosphate reductase of Hyphomonas neptunium (strain ATCC 15444).